The following is a 193-amino-acid chain: Small ribosomal subunit protein eS1 (193 aa).

The protein belongs to the eukaryotic ribosomal protein eS1 family.

This is Small ribosomal subunit protein eS1 from Sulfurisphaera tokodaii (strain DSM 16993 / JCM 10545 / NBRC 100140 / 7) (Sulfolobus tokodaii).